Consider the following 406-residue polypeptide: Argininosuccinate synthase (406 aa).

ATP is bound by residues 10–18 (AYSGGLDTS) and alanine 37. L-citrulline is bound by residues tyrosine 88 and serine 93. Residue glycine 118 participates in ATP binding. Threonine 120, asparagine 124, and aspartate 125 together coordinate L-aspartate. Residue asparagine 124 coordinates L-citrulline. Residues arginine 128, serine 179, serine 188, glutamate 264, and tyrosine 276 each coordinate L-citrulline.

The protein belongs to the argininosuccinate synthase family. Type 1 subfamily. In terms of assembly, homotetramer.

The protein resides in the cytoplasm. The catalysed reaction is L-citrulline + L-aspartate + ATP = 2-(N(omega)-L-arginino)succinate + AMP + diphosphate + H(+). The protein operates within amino-acid biosynthesis; L-arginine biosynthesis; L-arginine from L-ornithine and carbamoyl phosphate: step 2/3. This Azotobacter vinelandii (strain DJ / ATCC BAA-1303) protein is Argininosuccinate synthase.